The sequence spans 389 residues: Lipid-A-disaccharide synthase (389 aa).

This sequence belongs to the LpxB family.

It carries out the reaction a lipid X + a UDP-2-N,3-O-bis[(3R)-3-hydroxyacyl]-alpha-D-glucosamine = a lipid A disaccharide + UDP + H(+). The protein operates within bacterial outer membrane biogenesis; LPS lipid A biosynthesis. In terms of biological role, condensation of UDP-2,3-diacylglucosamine and 2,3-diacylglucosamine-1-phosphate to form lipid A disaccharide, a precursor of lipid A, a phosphorylated glycolipid that anchors the lipopolysaccharide to the outer membrane of the cell. This Burkholderia ambifaria (strain MC40-6) protein is Lipid-A-disaccharide synthase.